The chain runs to 1129 residues: ATP-dependent DNA helicase mph1 (1129 aa).

3 disordered regions span residues 1-101 (MTGS…FEDA), 124-222 (TQLT…QNEG), and 236-306 (DAFD…TQHK). Residues 45–63 (DGTASDVRRRPSENRESQR) show a composition bias toward basic and acidic residues. Polar residues-rich tracts occupy residues 203-222 (NTKA…QNEG) and 242-285 (ISLS…QTDQ). Over residues 297-306 (QKDEPPTQHK) the composition is skewed to basic and acidic residues. The Helicase ATP-binding domain occupies 331–499 (IAQKGLFHNL…AVIDGLDIAR (169 aa)). 344-351 (LPTGLGKT) contributes to the ATP binding site. The DEAH box motif lies at 447-450 (DEAH). Residues 674 to 843 (VLNHFMDAGE…GSRFTFHDDI (170 aa)) form the Helicase C-terminal domain. Disordered stretches follow at residues 863–930 (IPDE…VEIP), 1018–1060 (RQGD…STED), and 1072–1129 (SVVK…DSDD). 2 stretches are compositionally biased toward basic residues: residues 877 to 889 (RRGR…PKKF) and 1028 to 1044 (SPRH…KPRY). Polar residues predominate over residues 1077-1086 (QKQQPFYSSQ).

This sequence belongs to the DEAD box helicase family. DEAH subfamily. FANCM sub-subfamily. In terms of assembly, interacts with the MHF histone-fold complex to form the FANCM-MHF complex.

The protein localises to the nucleus. It carries out the reaction ATP + H2O = ADP + phosphate + H(+). Its function is as follows. ATP-dependent DNA helicase involved in DNA damage repair by homologous recombination and in genome maintenance. Capable of unwinding D-loops. Plays a role in limiting crossover recombinants during mitotic DNA double-strand break (DSB) repair. Component of a FANCM-MHF complex which promotes gene conversion at blocked replication forks, probably by reversal of the stalled fork. This Aspergillus oryzae (strain ATCC 42149 / RIB 40) (Yellow koji mold) protein is ATP-dependent DNA helicase mph1.